The primary structure comprises 260 residues: Snake venom serine proteinase 12 (260 aa).

A signal peptide spans 1 to 18 (MVLIRVLANLLILQLSYA). Residues 19-24 (QKSSEL) constitute a propeptide that is removed on maturation. The 227-residue stretch at 25–251 (VIGGDECNIN…HLDWIQSIIA (227 aa)) folds into the Peptidase S1 domain. 6 disulfides stabilise this stretch: Cys31-Cys163, Cys50-Cys66, Cys98-Cys258, Cys142-Cys212, Cys174-Cys191, and Cys202-Cys227. The Charge relay system role is filled by His65. Residue Asn103 is glycosylated (N-linked (GlcNAc...) asparagine). The Charge relay system role is filled by Asp110. The Charge relay system role is filled by Ser206.

This sequence belongs to the peptidase S1 family. Snake venom subfamily. As to quaternary structure, monomer. As to expression, expressed by the venom gland.

It is found in the secreted. Functionally, snake venom serine protease that may act in the hemostasis system of the prey. This is Snake venom serine proteinase 12 from Crotalus adamanteus (Eastern diamondback rattlesnake).